We begin with the raw amino-acid sequence, 567 residues long: Urease subunit alpha (567 aa).

Ni(2+) contacts are provided by H134, H136, and K217. The residue at position 217 (K217) is an N6-carboxylysine. Position 219 (H219) interacts with substrate. H246 and H272 together coordinate Ni(2+). The active-site Proton donor is the H320. D360 contacts Ni(2+).

The protein belongs to the metallo-dependent hydrolases superfamily. Urease alpha subunit family. In terms of assembly, heterotrimer of UreA (gamma), UreB (beta) and UreC (alpha) subunits. Three heterotrimers associate to form the active enzyme. Requires Ni cation as cofactor. In terms of processing, carboxylation allows a single lysine to coordinate two nickel ions.

Its subcellular location is the cytoplasm. The catalysed reaction is urea + 2 H2O + H(+) = hydrogencarbonate + 2 NH4(+). It functions in the pathway nitrogen metabolism; urea degradation; CO(2) and NH(3) from urea (urease route): step 1/1. This is Urease subunit alpha from Polynucleobacter asymbioticus (strain DSM 18221 / CIP 109841 / QLW-P1DMWA-1) (Polynucleobacter necessarius subsp. asymbioticus).